The chain runs to 155 residues: Large ribosomal subunit protein uL13 (155 aa).

It belongs to the universal ribosomal protein uL13 family. In terms of assembly, part of the 50S ribosomal subunit.

This protein is one of the early assembly proteins of the 50S ribosomal subunit, although it is not seen to bind rRNA by itself. It is important during the early stages of 50S assembly. This Rickettsia typhi (strain ATCC VR-144 / Wilmington) protein is Large ribosomal subunit protein uL13.